Here is a 235-residue protein sequence, read N- to C-terminus: Probable inactive serine protease 37 (235 aa).

A signal peptide spans 1 to 19 (MKFIFYLSVLTGTFLFADS). Residues 20–233 (SVQKEDPAPY…YVSWIENTAK (214 aa)) enclose the Peptidase S1 domain. 3 cysteine pairs are disulfide-bonded: Cys-40–Cys-56, Cys-131–Cys-198, and Cys-163–Cys-177.

It belongs to the peptidase S1 family.

The protein resides in the cytoplasmic vesicle. It is found in the secretory vesicle. It localises to the acrosome. Its subcellular location is the secreted. Functionally, plays a role in male fertility. May have a role in sperm migration or binding to zona-intact eggs. Involved in the activation of the proacrosin/acrosin system. The protein is Probable inactive serine protease 37 of Macaca fascicularis (Crab-eating macaque).